Reading from the N-terminus, the 635-residue chain is Threonine--tRNA ligase (635 aa).

The region spanning 1–61 (MINISFPDGS…DNDCKLRILT (61 aa)) is the TGS domain. Residues 242-533 (DHRKLGRELD…LIEEYAGRFP (292 aa)) are catalytic. C333, H384, and H510 together coordinate Zn(2+).

It belongs to the class-II aminoacyl-tRNA synthetase family. In terms of assembly, homodimer. Zn(2+) serves as cofactor.

It localises to the cytoplasm. The catalysed reaction is tRNA(Thr) + L-threonine + ATP = L-threonyl-tRNA(Thr) + AMP + diphosphate + H(+). Functionally, catalyzes the attachment of threonine to tRNA(Thr) in a two-step reaction: L-threonine is first activated by ATP to form Thr-AMP and then transferred to the acceptor end of tRNA(Thr). Also edits incorrectly charged L-seryl-tRNA(Thr). This Rickettsia conorii (strain ATCC VR-613 / Malish 7) protein is Threonine--tRNA ligase.